The chain runs to 531 residues: Isocitrate lyase (531 aa).

101–103 contributes to the substrate binding site; it reads SGW. Asp-184 is a Mg(2+) binding site. Residue Cys-222 is the Proton acceptor of the active site. Substrate is bound by residues 223–224, 380–384, and Thr-451; these read GH and NNSPS.

Belongs to the isocitrate lyase/PEP mutase superfamily. Isocitrate lyase family. Homotetramer. Mg(2+) is required as a cofactor.

The catalysed reaction is D-threo-isocitrate = glyoxylate + succinate. Its pathway is carbohydrate metabolism; glyoxylate cycle; (S)-malate from isocitrate: step 1/2. Functionally, involved in the metabolic adaptation in response to environmental changes. Catalyzes the reversible formation of succinate and glyoxylate from isocitrate, a key step of the glyoxylate cycle, which operates as an anaplerotic route for replenishing the tricarboxylic acid cycle during growth on fatty acid substrates. This chain is Isocitrate lyase, found in Pseudomonas aeruginosa (strain ATCC 15692 / DSM 22644 / CIP 104116 / JCM 14847 / LMG 12228 / 1C / PRS 101 / PAO1).